The primary structure comprises 318 residues: Malate dehydrogenase (318 aa).

NAD(+)-binding positions include 10-15 and Asp34; that span reads GGGQIG. Residues Arg83 and Arg89 each coordinate substrate. Residues Asn96 and 119–121 each bind NAD(+); that span reads LSN. Substrate is bound by residues Asn121 and Arg152. Residue His176 is the Proton acceptor of the active site.

Belongs to the LDH/MDH superfamily. MDH type 3 family.

It carries out the reaction (S)-malate + NAD(+) = oxaloacetate + NADH + H(+). Catalyzes the reversible oxidation of malate to oxaloacetate. This Syntrophotalea carbinolica (strain DSM 2380 / NBRC 103641 / GraBd1) (Pelobacter carbinolicus) protein is Malate dehydrogenase.